We begin with the raw amino-acid sequence, 393 residues long: Protein phosphatase 2C homolog 4 (393 aa).

Residues 33 to 368 enclose the PPM-type phosphatase domain; the sequence is YNCVGSMQGY…DNMTAIIVVL (336 aa). Mn(2+) contacts are provided by D83, G84, D310, and D359.

The protein belongs to the PP2C family. The cofactor is Mg(2+). It depends on Mn(2+) as a cofactor.

It catalyses the reaction O-phospho-L-seryl-[protein] + H2O = L-seryl-[protein] + phosphate. It carries out the reaction O-phospho-L-threonyl-[protein] + H2O = L-threonyl-[protein] + phosphate. This chain is Protein phosphatase 2C homolog 4 (PTC4), found in Saccharomyces cerevisiae (strain ATCC 204508 / S288c) (Baker's yeast).